A 437-amino-acid polypeptide reads, in one-letter code: MNNIVAIVGRPNVGKSTLFNRLTQSHQAIVDEEEGTTRDRQYSKVEWCGQIFSIIDTGGWVLNSDDIFEEEINKQVQIAIEEADIILFLVDVIHGTTDLDQQIAALLRREKKLVILVSNKADNYKLYAQSAEFYALGLGDPYNVSAINGSGTGELLDYLISNFTKKVDNKPEITIPAIAIVGKPNVGKSSLINALTNEERNIVTNIAGTTRDSIYTLYDKFGLKFYLVDTAGICKKKKVEENSEYYSIIRAIRSIESSDICILLIDATQCIMAQDINIFSIIQKNEKGLIIVVNKWDLIQNKNPKTIYTFENAIRQRTAPFTDVPIIFSSAQTKKRIYKILQVAKEVYDIRQIKIPTSQLNRILLPIIAKTPPPINKGKVVRIKYVTQLTNTIIPSFVFFCNLPKWIKTPYKRFLENQMRKNWKLTGTPINIFMREK.

EngA-type G domains lie at 3–167 and 176–352; these read NIVA…TKKV and PAIA…DIRQ. GTP-binding positions include 9 to 16, 56 to 60, 119 to 122, 182 to 189, 229 to 233, and 294 to 297; these read GRPNVGKS, DTGGW, NKAD, GKPNVGKS, DTAGI, and NKWD. The KH-like domain maps to 353 to 437; it reads IKIPTSQLNR…TPINIFMREK (85 aa).

Belongs to the TRAFAC class TrmE-Era-EngA-EngB-Septin-like GTPase superfamily. EngA (Der) GTPase family. As to quaternary structure, associates with the 50S ribosomal subunit.

In terms of biological role, GTPase that plays an essential role in the late steps of ribosome biogenesis. The chain is GTPase Der from Azobacteroides pseudotrichonymphae genomovar. CFP2.